Reading from the N-terminus, the 178-residue chain is uncharacterized protein (178 aa).

Over residues 1–13 (MEVASSSSACQFD) the composition is skewed to polar residues. Disordered stretches follow at residues 1–24 (MEVA…ELKP) and 47–114 (WPSR…KKEK).

This is an uncharacterized protein from Caenorhabditis elegans.